Consider the following 227-residue polypeptide: CDP-diacylglycerol--inositol 3-phosphatidyltransferase 1 (227 aa).

A run of 2 helical transmembrane segments spans residues 12 to 36 and 42 to 61; these read LSVY…AFAV and PLFS…DGWV. Mg(2+) is bound by residues D55 and D58. Residues G59, R63, and S69 each contribute to the a CDP-1,2-diacyl-sn-glycerol site. 4 helical membrane passes run 73–95, 101–122, 142–165, and 177–200; these read AVLD…SQIY, FLSL…TFLA, YGNR…LLLI, and VVAT…GWSM. Mg(2+)-binding residues include D76 and D80. D80 (proton acceptor) is an active-site residue.

The protein belongs to the CDP-alcohol phosphatidyltransferase class-I family. The cofactor is Mg(2+). It depends on Mn(2+) as a cofactor. As to expression, expressed in stems, flowers, shoots and roots. Present in epidermal tissues.

It localises to the membrane. The enzyme catalyses a CDP-1,2-diacyl-sn-glycerol + myo-inositol = a 1,2-diacyl-sn-glycero-3-phospho-(1D-myo-inositol) + CMP + H(+). Functionally, catalyzes the biosynthesis of phosphatidylinositol (PtdIns) as well as PtdIns:inositol exchange reaction. May thus act to reduce an excessive cellular PtdIns content. The exchange activity is due to the reverse reaction of PtdIns synthase and is dependent on CMP, which is tightly bound to the enzyme. In Arabidopsis thaliana (Mouse-ear cress), this protein is CDP-diacylglycerol--inositol 3-phosphatidyltransferase 1 (PIS1).